Reading from the N-terminus, the 475-residue chain is Endoglucanase A (475 aa).

The first 26 residues, 1–26 (MKKTTAFLLCFLMIFTALLPMQNANA), serve as a signal peptide directing secretion. H147 is an active-site residue. Residue E195 is the Proton donor of the active site. The Nucleophile role is filled by E332. Residues 409–474 (PVIVYGDYNN…LLGMVSKLPS (66 aa)) form the Dockerin domain.

The protein belongs to the glycosyl hydrolase 5 (cellulase A) family.

The catalysed reaction is Endohydrolysis of (1-&gt;4)-beta-D-glucosidic linkages in cellulose, lichenin and cereal beta-D-glucans.. The biological conversion of cellulose to glucose generally requires three types of hydrolytic enzymes: (1) Endoglucanases which cut internal beta-1,4-glucosidic bonds; (2) Exocellobiohydrolases that cut the disaccharide cellobiose from the non-reducing end of the cellulose polymer chain; (3) Beta-1,4-glucosidases which hydrolyze the cellobiose and other short cello-oligosaccharides to glucose. The chain is Endoglucanase A (celCCA) from Ruminiclostridium cellulolyticum (strain ATCC 35319 / DSM 5812 / JCM 6584 / H10) (Clostridium cellulolyticum).